We begin with the raw amino-acid sequence, 328 residues long: Malate dehydrogenase (328 aa).

Residue 12–18 (GAAGQIA) coordinates NAD(+). Arg93 and Arg99 together coordinate substrate. NAD(+) contacts are provided by residues Asn106, Gln113, and 130-132 (VGN). Substrate is bound by residues Asn132 and Arg163. The Proton acceptor role is filled by His188.

The protein belongs to the LDH/MDH superfamily. MDH type 2 family.

The enzyme catalyses (S)-malate + NAD(+) = oxaloacetate + NADH + H(+). Functionally, catalyzes the reversible oxidation of malate to oxaloacetate. The chain is Malate dehydrogenase from Burkholderia cenocepacia (strain HI2424).